We begin with the raw amino-acid sequence, 71 residues long: Small, acid-soluble spore protein 2 (71 aa).

This sequence belongs to the alpha/beta-type SASP family.

Functionally, SASP are bound to spore DNA. They are double-stranded DNA-binding proteins that cause DNA to change to an a-like conformation. They protect the DNA backbone from chemical and enzymatic cleavage and are thus involved in dormant spore's high resistance to UV light. The chain is Small, acid-soluble spore protein 2 from Bacillus subtilis.